The chain runs to 155 residues: MKISIYATLAAITLALPAAAQDGDAAKGEKEFNKCKACHMIQAPDGTDIIKGGKTGPNLYGVVGRKIASEEGFKYGEGILEVAEKNPDLTWTEADLIEYVTDPKPWLVKMTDDKGAKTKMTFKMGKNQADVVAFLAQNSPDAGGDGEAAAEGESN.

The N-terminal stretch at M1 to A20 is a signal peptide. Q21 is subject to Pyrrolidone carboxylic acid. Residues C35, C38, H39, and M120 each contribute to the heme c site. Residues A150 to N155 constitute a propeptide that is removed on maturation.

Post-translationally, binds 1 heme c group covalently per subunit.

The protein is Cytochrome c-550 (cycA) of Paracoccus denitrificans.